The primary structure comprises 218 residues: Telomere repeats-binding bouquet formation protein 2 (218 aa).

The disordered stretch occupies residues 117–143 (HDRMASSDKENIRPTPEHKQELSKSAE).

It belongs to the TERB2 family. Component of the MAJIN-TERB1-TERB2 complex, composed of MAJIN, TERB1 and TERB2. In terms of tissue distribution, specifically expressed in germline tissues.

The protein resides in the chromosome. The protein localises to the telomere. Its subcellular location is the nucleus inner membrane. Meiosis-specific telomere-associated protein involved in meiotic telomere attachment to the nucleus inner membrane, a crucial step for homologous pairing and synapsis. Component of the MAJIN-TERB1-TERB2 complex, which promotes telomere cap exchange by mediating attachment of telomeric DNA to the inner nuclear membrane and replacement of the protective cap of telomeric chromosomes: in early meiosis, the MAJIN-TERB1-TERB2 complex associates with telomeric DNA and the shelterin/telosome complex. During prophase, the complex matures and promotes release of the shelterin/telosome complex from telomeric DNA. This chain is Telomere repeats-binding bouquet formation protein 2, found in Mus musculus (Mouse).